A 405-amino-acid chain; its full sequence is Type II secretion system protein F (405 aa).

The Cytoplasmic segment spans residues 1–169 (MPLYRYKALD…SRALKGKVIN (169 aa)). Asp-98, Gln-151, and Asp-155 together coordinate Ca(2+). Residues 170 to 190 (ALIYPAILLAVVGCALLFLLG) form a helical membrane-spanning segment. Topologically, residues 191-218 (YVVPQFAQMYESLDVALPWFTQAVLSVG) are periplasmic. Residues 219–239 (LLVRDWWLVLVVIPGVLGLWL) form a helical membrane-spanning segment. Residues 240-370 (DRKRRNAAFR…LETAQAIDRA (131 aa)) lie on the Cytoplasmic side of the membrane. Residues 371–391 (LAALVPLITLVLASVVGLVII) traverse the membrane as a helical segment. Topologically, residues 392 to 405 (SVLVPLYDLTNAIG) are periplasmic.

This sequence belongs to the GSP F family. In terms of assembly, type II secretion system is composed of four main components: the outer membrane complex, the inner membrane complex, the cytoplasmic secretion ATPase and the periplasm-spanning pseudopilus. Homodimer. Interacts with XpsE and XpsL components.

The protein localises to the cell inner membrane. Functionally, component of the type II secretion system inner membrane complex required for the energy-dependent secretion of extracellular factors such as proteases and toxins from the periplasm. The sequence is that of Type II secretion system protein F (xpsF) from Xanthomonas campestris pv. campestris (strain ATCC 33913 / DSM 3586 / NCPPB 528 / LMG 568 / P 25).